The following is a 143-amino-acid chain: NADH-quinone oxidoreductase subunit A (143 aa).

The next 3 helical transmembrane spans lie at 8–28 (FGNV…GYLT), 63–83 (FYVV…LFPW), and 93–113 (FALV…VYAW).

This sequence belongs to the complex I subunit 3 family. In terms of assembly, NDH-1 is composed of 14 different subunits. Subunits NuoA, H, J, K, L, M, N constitute the membrane sector of the complex.

It is found in the cell inner membrane. It carries out the reaction a quinone + NADH + 5 H(+)(in) = a quinol + NAD(+) + 4 H(+)(out). Its function is as follows. NDH-1 shuttles electrons from NADH, via FMN and iron-sulfur (Fe-S) centers, to quinones in the respiratory chain. The immediate electron acceptor for the enzyme in this species is believed to be a menaquinone. Couples the redox reaction to proton translocation (for every two electrons transferred, four hydrogen ions are translocated across the cytoplasmic membrane), and thus conserves the redox energy in a proton gradient. The sequence is that of NADH-quinone oxidoreductase subunit A from Chlorobium phaeovibrioides (strain DSM 265 / 1930) (Prosthecochloris vibrioformis (strain DSM 265)).